The chain runs to 1245 residues: MDNTERSSNGNIQAETEAKEEKKNIKKESVSLMGLFSAADKLDYFLMLLGGLGACIHGATLPLFFVFFGKMLDSLGNLSTDPKAISSRVSQNALYLVYLGLVNFVSAWIGVSCWMQTGERQTARLRINYLKSILAKDITFFDTEARDSNLIFHISSDAILVQDAIGDKTDHVLRYLSQFIAGFVIGFLSVWQLTLLTLGVVPLIAIAGGGYAIVMSTISEKSETAYADAGKVAEEVMSQVRTVYAFVGEEKAVKSYSNSLKKALKLGKRSGLAKGLGVGLTYSLLFCAWALLLWYASLLVRHGKTNGAKAFTTILNVIFSGFALGQAAPSLSAIAKGRVAAANIFRMIGNNNSESSQRLDEGTTLQNVAGRIEFQKVSFAYPSRPNMVFENLSFTIRSGKTFAFVGPSGSGKSTIISMVQRFYEPNSGEILLDGNDIKSLKLKWFREQLGLVSQEPALFATTIASNILLGKENANMDQIIEAAKAANADSFIKSLPNGYNTQVGEGGTQLSGGQKQRIAIARAVLRNPKILLLDEATSALDAESEKIVQQALDNVMEKRTTIVVAHRLSTIRNVDKIVVLRDGQVRETGSHSELMLRGGDYATLVNCQETEPQENSRSIMSETCKSQAGSSSSRRVSSSRRTSSFRVDQEKTKNDDSKKDFSSSSMIWELIKLNSPEWPYALLGSIGAVLAGAQTPLFSMGIAYVLTAFYSPFPNVIKRDVEKVAIIFAGAGIVTAPIYLLQHYFYTLMGERLTSRVRLSLFSAILSNEIGWFDLDENNTGSLTSILAADATLVRSALADRLSTIVQNLSLTVTALALAFFYSWRVAAVVTACFPLLIAASLTEQLFLKGFGGDYTRAYSRATSVAREAIANIRTVAAYGAEKQISEQFTCELSKPTKNAFVRGHISGFGYGLSQFLAFCSYALGLWYVSVLINHKETNFGDSIKSFMVLIVTAFSVSETLALTPDIVKGTQALGSVFRVLHRETKISPDQPNSRMVSQVKGDIEFRNVSFVYPTRPEIDIFKNLNLRVSAGKSLAVVGPSGSGKSTVIGLIMRFYDPSNGNLCIDGQDIKTLNLRSLRKKLALVQQEPALFSTTIYENIKYGNENASEAEIMEAAKAANAHEFIIKMEEGYKTHAGDKGVQLSGGQKQRVAIARAVLKDPSVLLLDEATSALDTSSEKLVQEALDKLMKGRTTVLVAHRLSTIRKADTVAVLHKGRVVEKGSHRELVSIPNGFYKQLTSLQEVL.

A compositionally biased stretch (polar residues) spans 1–14 (MDNTERSSNGNIQA). The segment at 1-20 (MDNTERSSNGNIQAETEAKE) is disordered. The region spanning 47–336 (MLLGGLGACI…AAPSLSAIAK (290 aa)) is the ABC transmembrane type-1 1 domain. Residues 48-68 (LLGGLGACIHGATLPLFFVFF) form a helical membrane-spanning segment. N-linked (GlcNAc...) asparagine glycosylation is present at N77. The next 5 helical transmembrane spans lie at 94–114 (LYLV…VSCW), 171–191 (HVLR…LSVW), 195–215 (LLTL…AIVM), 276–296 (LGVG…LWYA), and 314–334 (ILNV…LSAI). 2 N-linked (GlcNAc...) asparagine glycosylation sites follow: N351 and N391. The region spanning 372–607 (IEFQKVSFAY…GGDYATLVNC (236 aa)) is the ABC transporter 1 domain. 406–413 (GPSGSGKS) contributes to the ATP binding site. Polar residues predominate over residues 610–629 (TEPQENSRSIMSETCKSQAG). The segment at 610–660 (TEPQENSRSIMSETCKSQAGSSSSRRVSSSRRTSSFRVDQEKTKNDDSKKD) is disordered. Residues 630 to 646 (SSSSRRVSSSRRTSSFR) are compositionally biased toward low complexity. The segment covering 647–660 (VDQEKTKNDDSKKD) has biased composition (basic and acidic residues). One can recognise an ABC transmembrane type-1 2 domain in the interval 681-969 (ALLGSIGAVL…TLALTPDIVK (289 aa)). 2 helical membrane passes run 686-706 (IGAV…AYVL) and 725-745 (AIIF…QHYF). A glycan (N-linked (GlcNAc...) asparagine) is linked at N778. 4 helical membrane-spanning segments follow: residues 805 to 822 (IVQN…AFFY), 828 to 848 (AVVT…QLFL), 913 to 933 (LSQF…SVLI), and 947 to 967 (FMVL…TPDI). In terms of domain architecture, ABC transporter 2 spans 1004 to 1240 (IEFRNVSFVY…PNGFYKQLTS (237 aa)). N-linked (GlcNAc...) asparagine glycosylation occurs at N1008. Position 1039-1046 (1039-1046 (GPSGSGKS)) interacts with ATP. N-linked (GlcNAc...) asparagine glycosylation is present at N1106.

The protein belongs to the ABC transporter superfamily. ABCB family. Multidrug resistance exporter (TC 3.A.1.201) subfamily.

The protein resides in the membrane. This Arabidopsis thaliana (Mouse-ear cress) protein is ABC transporter B family member 13 (ABCB13).